A 691-amino-acid chain; its full sequence is Menaquinone reductase, molybdopterin-binding-like subunit (691 aa).

The tat-type signal signal peptide spans 1-27; that stretch reads MALDRRGFLKFIGGATAGILATPVVWK. Residues 50–106 enclose the 4Fe-4S Mo/W bis-MGD-type domain; it reads NSYVPTVSKLCPTGIGVRVRLVDGRPVRVIGNPEHPLSKGGVSSIAAAEVQMLYSPA.

Belongs to the prokaryotic molybdopterin-containing oxidoreductase family. The Qrc complex is composed of four subunits: QrcA, QrcB, QrcC and QrcD. Can form a supercomplex with the [NiFe] hydrogenase HynA1 and the tetraheme Type I cytochrome c3 TpIc(3), its physiological electron donors. There is no molybdenum or tungsten pterin cofactor present in the Qrc complex, despite the similarity of QrcB to molybdopterin-containing oxidoreductases. serves as cofactor. Predicted to be exported by the Tat system. The position of the signal peptide cleavage has not been experimentally proven.

It localises to the periplasm. Functionally, component of the respiratory Qrc complex, that catalyzes the reduction of the menaquinone pool using electrons transferred from the reduced periplasmic cytochrome c3, and which is probably involved in sulfate respiration. Is likely essential for growth on H(2) or formate since the periplasmic hydrogenases and/or formate dehydrogenases act as primary electron donors for the Qrc complex. The function of the QrcB subunit is unknown; in the absence of a catalytic site, it may provide a structural scaffold for the other subunits. The polypeptide is Menaquinone reductase, molybdopterin-binding-like subunit (Nitratidesulfovibrio vulgaris (strain ATCC 29579 / DSM 644 / CCUG 34227 / NCIMB 8303 / VKM B-1760 / Hildenborough) (Desulfovibrio vulgaris)).